The following is a 798-amino-acid chain: Serine/threonine-protein kinase haspin (798 aa).

The segment at 1-110 (MAASLPGPGS…WKLRARPSLT (110 aa)) is disordered. Ser-58 is modified (phosphoserine). Residues 59–70 (QSDDPDDPDDPD) show a composition bias toward acidic residues. Ser-93 bears the Phosphoserine; by AURKB mark. Thr-97 carries the phosphothreonine modification. Ser-143 carries the phosphoserine; by AURKB modification. Ser-147 bears the Phosphoserine mark. Residues 275–350 (LVVGNGPEGP…KHQEATETSL (76 aa)) are disordered. The segment covering 300–315 (CQERGLQEAVRREHQE) has biased composition (basic and acidic residues). Positions 484-798 (LQRCEKIGEG…DLLCQHSLFK (315 aa)) constitute a Protein kinase domain. Residues 490-498 (IGEGVFGEV), Lys-511, 606-611 (EFGGID), 649-654 (DLHWGN), and 687-689 (DYT) each bind ATP. The active-site Proton acceptor is Asp-649.

The protein belongs to the protein kinase superfamily. Ser/Thr protein kinase family. Haspin subfamily. It depends on Mg(2+) as a cofactor. In terms of processing, autophosphorylated on both serine and threonine residues. Strongly phosphorylated during mitosis but this does not appear to significantly affect its intrinsic kinase activity. Phosphorylation by AURKB is required for full activity toward histone H3 at 'Ser-3' in mitosis. Strongly expressed in testis. Also present in thymus and bone marrow and low levels observed in prostate, intestine, lung, spleen and lymph node. Expressed in fetal skin, liver, kidney and small intestine and also in proliferating but not non-proliferating cell lines.

It is found in the nucleus. It localises to the chromosome. The protein localises to the cytoplasm. Its subcellular location is the cytoskeleton. The protein resides in the spindle. It carries out the reaction L-seryl-[protein] + ATP = O-phospho-L-seryl-[protein] + ADP + H(+). The enzyme catalyses L-threonyl-[protein] + ATP = O-phospho-L-threonyl-[protein] + ADP + H(+). Its activity is regulated as follows. Constitutive activity that does not require phosphorylation. Specifically inhibited by 3-(1H-indazol-5-yl)-N-propylimidazo[1,2-b]pyridazin-6-amine (CHR-6494). Functionally, serine/threonine-protein kinase that phosphorylates histone H3 at 'Thr-3' (H3T3ph) during mitosis. May act through H3T3ph to both position and modulate activation of AURKB and other components of the chromosomal passenger complex (CPC) at centromeres to ensure proper chromatid cohesion, metaphase alignment and normal progression through the cell cycle. The protein is Serine/threonine-protein kinase haspin of Homo sapiens (Human).